We begin with the raw amino-acid sequence, 1057 residues long: Hemophilin receptor (1057 aa).

In terms of domain architecture, TBDR plug spans 168–285 (KVYDANRSSV…VGGAVVVKTL (118 aa)). Positions 296–1057 (SFGAELKVEG…TMKISWTTKF (762 aa)) constitute a TBDR beta-barrel domain.

The protein belongs to the TonB-dependent receptor family.

Its subcellular location is the cell outer membrane. Part of a high affinity heme acquisition system. Functions as a gateway for heme entry into the bacterial cell, enabling growth on hemoprotein sources. Can acquire heme directly from hemoprotein reservoirs, however, HphA likely enhances the efficiency of this process by delivering heme to HphR. Is essential for virulence, bacterial dissemination and growth in the blood. The protein is Hemophilin receptor of Acinetobacter baumannii.